The chain runs to 218 residues: Ornithine decarboxylase antizyme 2 (218 aa).

It belongs to the ODC antizyme family. As to quaternary structure, interacts with ODC1 and thereby sterically blocks ODC homodimerization. As to expression, expressed ubiquitously in 24 hours embryos, with highest levels in telencephalon, lens, retina, cerebellum and hindbrain primordia.

Functionally, ornithine decarboxylase (ODC) antizyme protein that negatively regulates ODC activity and intracellular polyamine biosynthesis and uptake in response to increased intracellular polyamine levels. Binds to ODC monomers, inhibiting the assembly of the functional ODC homodimers. Does not target the ODC monomers for degradation, which allows a protein synthesis-independent restoration of ODC activity. The chain is Ornithine decarboxylase antizyme 2 (oaz1b) from Danio rerio (Zebrafish).